Here is a 252-residue protein sequence, read N- to C-terminus: Lipoprotein PrgK (252 aa).

An N-terminal signal peptide occupies residues 1-17 (MIRRYLYTFLLVMTLAG). Residue Cys-18 is the site of N-palmitoyl cysteine attachment. Residue Cys-18 is the site of S-diacylglycerol cysteine attachment. Residues 207–227 (FATSWIVLIILLSVMSAGFGV) form a helical membrane-spanning segment.

The protein belongs to the YscJ lipoprotein family.

It is found in the cell outer membrane. Functionally, required for invasion of epithelial cells. Could be involved in protein secretion. The polypeptide is Lipoprotein PrgK (prgK) (Salmonella typhimurium (strain LT2 / SGSC1412 / ATCC 700720)).